The primary structure comprises 156 residues: Small ribosomal subunit protein uS7 (156 aa).

The protein belongs to the universal ribosomal protein uS7 family. Part of the 30S ribosomal subunit. Contacts proteins S9 and S11.

Its function is as follows. One of the primary rRNA binding proteins, it binds directly to 16S rRNA where it nucleates assembly of the head domain of the 30S subunit. Is located at the subunit interface close to the decoding center, probably blocks exit of the E-site tRNA. This Clostridium perfringens (strain ATCC 13124 / DSM 756 / JCM 1290 / NCIMB 6125 / NCTC 8237 / Type A) protein is Small ribosomal subunit protein uS7.